The following is a 337-amino-acid chain: MSIARRTTLSKFLIEQQRETNNLPADLRLLIEVVARACKAISYNVSKGALGDALGTAGSENVQGEVQKKLDILSNEILLDANEWGGNLAAMASEEMETFFPIPANYPRGEYLLVFDPLDGSSNIDVNVSIGTIFSVLRCPHGKQATEESFLQPGTEQVAAGYAVYGPQSVFVLTTGNGVNCFTLDREVGSWVLTQSNMQIPADTREYAINASNARHWYEPVQRYVSELNAGKEGPRGDNFNMRWIASMVADVHRILNRGGIFMYPADKRTPDRPGKLRLMYEANPMSFIVEQAGGAATTGTQRIMEVQPTGLHQRVPVFLGSKNEVERVTAYHNEGK.

The Mg(2+) site is built by E94, D116, L118, and D119. Substrate-binding positions include D119–S122, N210, and K276. E282 lines the Mg(2+) pocket.

It belongs to the FBPase class 1 family. In terms of assembly, homotetramer. The cofactor is Mg(2+).

It localises to the cytoplasm. The enzyme catalyses beta-D-fructose 1,6-bisphosphate + H2O = beta-D-fructose 6-phosphate + phosphate. Its pathway is carbohydrate biosynthesis; gluconeogenesis. This is Fructose-1,6-bisphosphatase class 1 from Burkholderia vietnamiensis (strain G4 / LMG 22486) (Burkholderia cepacia (strain R1808)).